We begin with the raw amino-acid sequence, 220 residues long: Probable GTP-binding protein EngB (220 aa).

An EngB-type G domain is found at Asp-41 to Leu-219. GTP contacts are provided by residues Gly-49–Ser-56, Gly-76–Glu-80, Asp-96–Gly-99, Thr-164–Asp-167, and Met-197–Ala-200. Residues Ser-56 and Thr-78 each coordinate Mg(2+).

Belongs to the TRAFAC class TrmE-Era-EngA-EngB-Septin-like GTPase superfamily. EngB GTPase family. Mg(2+) serves as cofactor.

Functionally, necessary for normal cell division and for the maintenance of normal septation. This is Probable GTP-binding protein EngB from Hyphomonas neptunium (strain ATCC 15444).